The following is a 1476-amino-acid chain: MEGGKGPRLRDFLSGSLATWALGLAGLVGEAEDSEGEEEEEEEEPPLWLEKRFLRLSDGALLLRVLGIIAPSSRGGPRMLRGLDGPAAWRVWNLNHLWGRLRDFYQEELQLLILSPPPDLQTLGFDPLSEEAVEQLEGVLRLLLGASVQCEHRELFIRHIQGLSLEVQSELAAAIQEVTQPGAGVVLALSGPDPGELAPAELEMLSRSLMGTLSKLARERDLGAQRLAELLLEREPLCLRPEAPSRAPAEGPSHHLALQLANAKAQLRRLRQELEEKAELLLDSQAEVQGLEAEIRRLRQEAQALSGQAKRAELYREEAEALRERAGRLPRLQEELRRCRERLQAAEAYKSQLEEERVLSGVLEASKALLEEQLEAARERCARLHETQRENLLLRTRLGEAHAELDSLRHQVDQLAEENVELELELQRSLEPPPGSPGEAPLAGAAPSLQDEVREAEAGRLRTLERENRELRGLLQVLQGQPGGQHPLLEAPREDPVLPVLEEAPQTPVAFDHSPQGLVQKARDGGPQALDLAPPALDSVLEASAECPQAPDSDPQEAESPLQAAAMDPQASDWSPQESGSPVETQESPEKAGRRSSLQSPASVAPPQGPGTKIQAPQLLGGETEGREAPQGELVPEAWGLRQEGPEHKPGPSEPSSVQLEEQEGPNQGLDLATGQAEAREHDQRLEGTVRDPAWQKPQQKSEGALEVQVWEGPIPGESLASGVAEQEALREEVAQLRRKAEALGDELEAQARKLEAQNTEAARLSKELAQARRAEAEAHREAEAQAWEQARLREAVEAAGQELESASQEREALVEALAAAGRERRQWEREGSRLRAQSEAAEERMQVLESEGRQHLEEAERERREKEALQAELEKAVVRGKELGDRLEHLQRELEQAALERQEFLREKESQHQRYQGLEQRLEAELQAAATSKEEALMELKTRALQLEEELFQLRQGPAGLGPKKRAEPQLVETQNVRLIEVERSNAMLVAEKAALQGQLQHLEGQLGSLQGRAQELLLQSQRAQEHSSRLQAEKSVLEIQGQELHRKLEVLEEEVRAARQSQEETRGQQQALLRDHKALAQLQRRQEAELEGLLVRHRDLKANMRALELAHRELQGRHEQLQAQRASVEAQEVALLAERERLMQDGHRQRGLEEELRRLQSEHDRAQMLLAELSRERGELQGERGELRGRLARLELERAQLEMQSQQLRESNQQLDLSACRLTTQCELLTQLRSAQEEENRQLLAEVQALSRENRELLERSLESRDHLHREQREYLDQLNALRREKQKLVEKIMDQYRVLEPVPLPRTKKGSWLADKVKRLMRPRREGGPPGGLRLGADGAGSTESLGGPPETELPEGREADGTGSPSPAPMRRAQSSLCLRDETLAGGQRRKLSSRFPVGRSSESFSPGDTPRQRFRQRHPGPLGAPVSHSKGPGVGWENSAETLQEHETDANREGPEVQEPEKRPLTPSLSQ.

Positions 253–481 form a coiled coil; sequence SHHLALQLAN…RGLLQVLQGQ (229 aa). 4 disordered regions span residues 427–451, 509–706, 825–866, and 1323–1476; these read QRSL…SLQD, VAFD…EGAL, RRQW…ERRE, and LMRP…SLSQ. Phosphoserine is present on S436. Over residues 572-586 the composition is skewed to polar residues; sequence SDWSPQESGSPVETQ. Phosphoserine is present on S596. Basic and acidic residues-rich tracts occupy residues 678-690, 825-834, and 842-866; these read EARE…EGTV, RRQWEREGSR, and AEER…ERRE. A coiled-coil region spans residues 720-1303; it reads LASGVAEQEA…KIMDQYRVLE (584 aa). 2 positions are modified to phosphoserine: S1348 and S1379. Residues 1448 to 1469 show a composition bias toward basic and acidic residues; it reads LQEHETDANREGPEVQEPEKRP.

Belongs to the CCDC88 family. As to quaternary structure, homodimer. Interacts with DOCK8. Interacts (via C-terminus) with intact microtubules. Interacts with dynein-dynactin motor complex. Interacts (via C-terminus) with HSPA5. Expressed in endothelium (at protein level). Expressed in NK cells (at protein level).

Its subcellular location is the membrane. The protein resides in the cytoplasm. It is found in the cytoskeleton. The protein localises to the microtubule organizing center. It localises to the endoplasmic reticulum. Its subcellular location is the golgi apparatus. Acts as a positive regulator of T-cell maturation and inflammatory function. Required for several functions of T-cells, in both the CD4(+) and the CD8(+) compartments and this includes expression of cell surface markers of activation, proliferation, and cytokine production in response to specific or non-specific stimulation. Enhances NK cell cytotoxicity by positively regulating polarization of microtubule-organizing center (MTOC) to cytotoxic synapse, lytic granule transport along microtubules, and dynein-mediated clustering to MTOC. Interacts with HSPA5 and stabilizes the interaction between HSPA5 and ERN1, leading to suppression of ERN1-induced JNK activation and endoplasmic reticulum stress-induced apoptosis. The sequence is that of Coiled-coil domain-containing protein 88B (CCDC88B) from Homo sapiens (Human).